A 338-amino-acid polypeptide reads, in one-letter code: Phenylalanine--tRNA ligase alpha subunit (338 aa).

Glu-252 lines the Mg(2+) pocket.

It belongs to the class-II aminoacyl-tRNA synthetase family. Phe-tRNA synthetase alpha subunit type 1 subfamily. As to quaternary structure, tetramer of two alpha and two beta subunits. The cofactor is Mg(2+).

The protein resides in the cytoplasm. The enzyme catalyses tRNA(Phe) + L-phenylalanine + ATP = L-phenylalanyl-tRNA(Phe) + AMP + diphosphate + H(+). This is Phenylalanine--tRNA ligase alpha subunit from Pseudomonas aeruginosa (strain UCBPP-PA14).